Reading from the N-terminus, the 332-residue chain is Aquaporin-7-2 (332 aa).

Positions 1–40 are enriched in polar residues; it reads MSGQHQITEQPSGNPLSRTSTLIQEKPLTPTSSHAGTQKQ. The disordered stretch occupies residues 1-46; sequence MSGQHQITEQPSGNPLSRTSTLIQEKPLTPTSSHAGTQKQPEAPRQ. The Cytoplasmic segment spans residues 1-66; the sequence is MSGQHQITEQ…RHAIRKPMAE (66 aa). The chain crosses the membrane as a helical span at residues 67-87; the sequence is FFGVALLIIFGAGSACQVVLS. Over 88–100 the chain is Extracellular; that stretch reads TNPDVASSARGSF. A helical transmembrane segment spans residues 101 to 121; that stretch reads LSINFGWAIGIAMGVWVSGGI. Residues 122–144 are Cytoplasmic-facing; it reads SGGHINPAITIAMATYRGFPWCK. Positions 127 to 129 match the NPA 1 motif; that stretch reads NPA. Residues 145-165 traverse the membrane as a helical segment; the sequence is VPSYILAQVLGGVVGAALVYA. The Extracellular segment spans residues 166-199; it reads NYIHAIDVFEGGHHIRTEATASLFATYALPYMTQ. The chain crosses the membrane as a helical span at residues 200-220; the sequence is ASCFFSEFLATAVLSMMVFAL. The Cytoplasmic segment spans residues 221–230; the sequence is TDKRNHSPTN. A helical membrane pass occupies residues 231–251; it reads GLLPFALFILFVGLGASLGME. At 252–283 the chain is on the extracellular side; sequence TAYALNPARDFGPRLFLAMAGYGKALFNYRSQ. The short motif at 257–259 is the NPA 2 element; the sequence is NPA. The helical transmembrane segment at 284-304 threads the bilayer; it reads YWLWAPIIAPVLGAQAGGLLY. Topologically, residues 305–332 are cytoplasmic; that stretch reads DTFLNDGDNSPIKWRCASSQEQQLAEVV.

Belongs to the MIP/aquaporin (TC 1.A.8) family.

It localises to the membrane. The catalysed reaction is H2O(in) = H2O(out). In terms of biological role, water channel required to facilitate the transport of water across membranes. Does not mediate the transport carbon dioxide across the membrane. The polypeptide is Aquaporin-7-2 (Laccaria bicolor (Bicoloured deceiver)).